The chain runs to 231 residues: Uracil-DNA glycosylase (231 aa).

Residue Asp-74 is the Proton acceptor of the active site.

It belongs to the uracil-DNA glycosylase (UDG) superfamily. UNG family.

The protein localises to the cytoplasm. It carries out the reaction Hydrolyzes single-stranded DNA or mismatched double-stranded DNA and polynucleotides, releasing free uracil.. Its function is as follows. Excises uracil residues from the DNA which can arise as a result of misincorporation of dUMP residues by DNA polymerase or due to deamination of cytosine. This chain is Uracil-DNA glycosylase, found in Campylobacter jejuni subsp. jejuni serotype O:6 (strain 81116 / NCTC 11828).